The chain runs to 126 residues: Protein ApaG (126 aa).

The ApaG domain occupies 2–126 (SDPRYQVDVS…FRLAVPGALH (125 aa)).

The polypeptide is Protein ApaG (Pseudomonas fluorescens (strain ATCC BAA-477 / NRRL B-23932 / Pf-5)).